Reading from the N-terminus, the 215-residue chain is 3-isopropylmalate dehydratase small subunit (215 aa).

The protein belongs to the LeuD family. LeuD type 1 subfamily. Heterodimer of LeuC and LeuD.

The enzyme catalyses (2R,3S)-3-isopropylmalate = (2S)-2-isopropylmalate. The protein operates within amino-acid biosynthesis; L-leucine biosynthesis; L-leucine from 3-methyl-2-oxobutanoate: step 2/4. Its function is as follows. Catalyzes the isomerization between 2-isopropylmalate and 3-isopropylmalate, via the formation of 2-isopropylmaleate. This chain is 3-isopropylmalate dehydratase small subunit, found in Teredinibacter turnerae (strain ATCC 39867 / T7901).